A 325-amino-acid polypeptide reads, in one-letter code: ATP synthase gamma chain (325 aa).

This sequence belongs to the ATPase gamma chain family. F-type ATPases have 2 components, CF(1) - the catalytic core - and CF(0) - the membrane proton channel. CF(1) has five subunits: alpha(3), beta(3), gamma(1), delta(1), epsilon(1). CF(0) has three main subunits: a, b and c.

It localises to the cell membrane. Produces ATP from ADP in the presence of a proton gradient across the membrane. The gamma chain is believed to be important in regulating ATPase activity and the flow of protons through the CF(0) complex. This chain is ATP synthase gamma chain, found in Corynebacterium diphtheriae (strain ATCC 700971 / NCTC 13129 / Biotype gravis).